A 561-amino-acid polypeptide reads, in one-letter code: Putative transport protein YbjL (561 aa).

5 consecutive transmembrane segments (helical) span residues 8–28, 32–52, 66–86, 94–114, and 158–178; these read LLNG…LCLG, LGSV…LLGQ, FMLF…SIFF, MLAL…GKLF, and NLSL…IVGA. 2 RCK C-terminal domains span residues 200–288 and 292–373; these read RGLD…SFRN and VFDR…RIGF. Helical transmembrane passes span 383 to 403, 406 to 426, 447 to 467, 475 to 495, and 540 to 560; these read LLAF…TFQF, FSFG…LGFL, FGLM…INNG, MLIA…LFGA, and AIAN…WPGL.

The protein belongs to the AAE transporter (TC 2.A.81) family. YbjL subfamily.

It localises to the cell membrane. This is Putative transport protein YbjL from Salmonella paratyphi C (strain RKS4594).